We begin with the raw amino-acid sequence, 384 residues long: Putative glycosyltransferase EpsF (384 aa).

It belongs to the glycosyltransferase group 1 family. Glycosyltransferase 4 subfamily.

Functionally, may be involved in the production of the exopolysaccharide (EPS) component of the extracellular matrix during biofilm formation. EPS is responsible for the adhesion of chains of cells into bundles. Required for biofilm maintenance. The chain is Putative glycosyltransferase EpsF (epsF) from Bacillus subtilis (strain 168).